We begin with the raw amino-acid sequence, 397 residues long: Tryptophan synthase beta chain (397 aa).

N6-(pyridoxal phosphate)lysine is present on K87.

The protein belongs to the TrpB family. As to quaternary structure, tetramer of two alpha and two beta chains. The cofactor is pyridoxal 5'-phosphate.

The catalysed reaction is (1S,2R)-1-C-(indol-3-yl)glycerol 3-phosphate + L-serine = D-glyceraldehyde 3-phosphate + L-tryptophan + H2O. Its pathway is amino-acid biosynthesis; L-tryptophan biosynthesis; L-tryptophan from chorismate: step 5/5. Its function is as follows. The beta subunit is responsible for the synthesis of L-tryptophan from indole and L-serine. In Escherichia coli O17:K52:H18 (strain UMN026 / ExPEC), this protein is Tryptophan synthase beta chain.